The chain runs to 377 residues: Chaperone protein DnaJ (377 aa).

The 65-residue stretch at 5–69 (EFYDRLGVSK…QKRSAYDQYG (65 aa)) folds into the J domain. A CR-type zinc finger spans residues 133-215 (GVEKDVSYHR…CHGTGHEKET (83 aa)). Residues Cys146, Cys149, Cys163, Cys166, Cys189, Cys192, Cys203, and Cys206 each contribute to the Zn(2+) site. 4 CXXCXGXG motif repeats span residues 146–153 (CHTCAGSG), 163–170 (CGRCHGSG), 189–196 (CDVCHGSG), and 203–210 (CQTCHGTG).

The protein belongs to the DnaJ family. In terms of assembly, homodimer. Zn(2+) is required as a cofactor.

It is found in the cytoplasm. Participates actively in the response to hyperosmotic and heat shock by preventing the aggregation of stress-denatured proteins and by disaggregating proteins, also in an autonomous, DnaK-independent fashion. Unfolded proteins bind initially to DnaJ; upon interaction with the DnaJ-bound protein, DnaK hydrolyzes its bound ATP, resulting in the formation of a stable complex. GrpE releases ADP from DnaK; ATP binding to DnaK triggers the release of the substrate protein, thus completing the reaction cycle. Several rounds of ATP-dependent interactions between DnaJ, DnaK and GrpE are required for fully efficient folding. Also involved, together with DnaK and GrpE, in the DNA replication of plasmids through activation of initiation proteins. The chain is Chaperone protein DnaJ from Streptococcus uberis (strain ATCC BAA-854 / 0140J).